The primary structure comprises 773 residues: 3-isopropylmalate dehydratase (773 aa).

Residues cysteine 355, cysteine 415, and cysteine 418 each coordinate [4Fe-4S] cluster.

The protein belongs to the aconitase/IPM isomerase family. As to quaternary structure, monomer. Requires [4Fe-4S] cluster as cofactor.

It carries out the reaction (2R,3S)-3-isopropylmalate = (2S)-2-isopropylmalate. Its pathway is amino-acid biosynthesis; L-leucine biosynthesis; L-leucine from 3-methyl-2-oxobutanoate: step 2/4. In terms of biological role, catalyzes the isomerization between 2-isopropylmalate and 3-isopropylmalate, via the formation of 2-isopropylmaleate. This chain is 3-isopropylmalate dehydratase (LEU1), found in Mycosarcoma maydis (Corn smut fungus).